The sequence spans 272 residues: MSAIKVFILSDSIGETAHNVALAAAAQFSDYDIRYQRFPFVRTDSLLQTVLSQALKEHAAIFHTFVDRRLSQIVNQFCEAHELPYYDVITPALDTFSQITHVQPSNHPGTVHALNTNYFDRINAIEFAVTYDDGKNPSGFLEADVVLLGVSRTSKTPLSLYLANRNLKVANLPLVPQAQIPDEIWKVDPKKIFGLTNDPEKLNDIRRQRMVQYGLNPDTMYSNTDKIKAELEYADKIFKKIGCLVINVANKSIEETATLITESLNTDDTNNG.

149 to 156 (GVSRTSKT) is an ADP binding site.

The protein belongs to the pyruvate, phosphate/water dikinase regulatory protein family. PDRP subfamily.

The catalysed reaction is N(tele)-phospho-L-histidyl/L-threonyl-[pyruvate, phosphate dikinase] + ADP = N(tele)-phospho-L-histidyl/O-phospho-L-threonyl-[pyruvate, phosphate dikinase] + AMP + H(+). It carries out the reaction N(tele)-phospho-L-histidyl/O-phospho-L-threonyl-[pyruvate, phosphate dikinase] + phosphate + H(+) = N(tele)-phospho-L-histidyl/L-threonyl-[pyruvate, phosphate dikinase] + diphosphate. Bifunctional serine/threonine kinase and phosphorylase involved in the regulation of the pyruvate, phosphate dikinase (PPDK) by catalyzing its phosphorylation/dephosphorylation. This chain is Putative pyruvate, phosphate dikinase regulatory protein, found in Lactiplantibacillus plantarum (strain ATCC BAA-793 / NCIMB 8826 / WCFS1) (Lactobacillus plantarum).